The primary structure comprises 274 residues: HTH-type transcriptional regulator GadX (274 aa).

The 98-residue stretch at 145–242 (TRVCTVINNN…GMTPTEYQER (98 aa)) folds into the HTH araC/xylS-type domain. DNA-binding regions (H-T-H motif) lie at residues 162-183 (ARIA…REEE) and 209-232 (IKRV…RNYY).

Homodimer.

Positively regulates the expression of about fifteen genes involved in acid resistance such as gadA, gadB and gadC. Depending on the conditions (growth phase and medium), can repress gadW. The polypeptide is HTH-type transcriptional regulator GadX (gadX) (Escherichia coli (strain K12)).